The sequence spans 208 residues: ATP phosphoribosyltransferase (208 aa).

Belongs to the ATP phosphoribosyltransferase family. Short subfamily. In terms of assembly, heteromultimer composed of HisG and HisZ subunits.

It localises to the cytoplasm. The catalysed reaction is 1-(5-phospho-beta-D-ribosyl)-ATP + diphosphate = 5-phospho-alpha-D-ribose 1-diphosphate + ATP. It functions in the pathway amino-acid biosynthesis; L-histidine biosynthesis; L-histidine from 5-phospho-alpha-D-ribose 1-diphosphate: step 1/9. Its function is as follows. Catalyzes the condensation of ATP and 5-phosphoribose 1-diphosphate to form N'-(5'-phosphoribosyl)-ATP (PR-ATP). Has a crucial role in the pathway because the rate of histidine biosynthesis seems to be controlled primarily by regulation of HisG enzymatic activity. The chain is ATP phosphoribosyltransferase from Clostridioides difficile (strain 630) (Peptoclostridium difficile).